The chain runs to 324 residues: Biotin synthase 1 (324 aa).

Residues 37 to 256 (NAIETASLLS…VALARILMPA (220 aa)) enclose the Radical SAM core domain. [4Fe-4S] cluster is bound by residues cysteine 52, cysteine 56, and cysteine 59. [2Fe-2S] cluster-binding residues include cysteine 96, cysteine 127, cysteine 187, and arginine 260.

It belongs to the radical SAM superfamily. Biotin synthase family. Homodimer. It depends on [4Fe-4S] cluster as a cofactor. [2Fe-2S] cluster serves as cofactor.

It carries out the reaction (4R,5S)-dethiobiotin + (sulfur carrier)-SH + 2 reduced [2Fe-2S]-[ferredoxin] + 2 S-adenosyl-L-methionine = (sulfur carrier)-H + biotin + 2 5'-deoxyadenosine + 2 L-methionine + 2 oxidized [2Fe-2S]-[ferredoxin]. The protein operates within cofactor biosynthesis; biotin biosynthesis; biotin from 7,8-diaminononanoate: step 2/2. Functionally, catalyzes the conversion of dethiobiotin (DTB) to biotin by the insertion of a sulfur atom into dethiobiotin via a radical-based mechanism. This Paracoccus denitrificans (strain Pd 1222) protein is Biotin synthase 1.